We begin with the raw amino-acid sequence, 512 residues long: Lysine--tRNA ligase (512 aa).

Mg(2+)-binding residues include Glu-422 and Glu-429.

The protein belongs to the class-II aminoacyl-tRNA synthetase family. In terms of assembly, homodimer. The cofactor is Mg(2+).

The protein resides in the cytoplasm. It carries out the reaction tRNA(Lys) + L-lysine + ATP = L-lysyl-tRNA(Lys) + AMP + diphosphate. This Paraburkholderia phymatum (strain DSM 17167 / CIP 108236 / LMG 21445 / STM815) (Burkholderia phymatum) protein is Lysine--tRNA ligase.